The sequence spans 196 residues: Peptide deformylase (196 aa).

The Fe cation site is built by cysteine 105 and histidine 147. Residue glutamate 148 is part of the active site. Residue histidine 151 coordinates Fe cation.

This sequence belongs to the polypeptide deformylase family. It depends on Fe(2+) as a cofactor.

It catalyses the reaction N-terminal N-formyl-L-methionyl-[peptide] + H2O = N-terminal L-methionyl-[peptide] + formate. Its function is as follows. Removes the formyl group from the N-terminal Met of newly synthesized proteins. Requires at least a dipeptide for an efficient rate of reaction. N-terminal L-methionine is a prerequisite for activity but the enzyme has broad specificity at other positions. The protein is Peptide deformylase of Christiangramia forsetii (strain DSM 17595 / CGMCC 1.15422 / KT0803) (Gramella forsetii).